The primary structure comprises 163 residues: Crossover junction endodeoxyribonuclease RuvC (163 aa).

Residues Asp-7, Glu-67, and Asp-140 contribute to the active site. Asp-7, Glu-67, and Asp-140 together coordinate Mg(2+).

This sequence belongs to the RuvC family. Homodimer which binds Holliday junction (HJ) DNA. The HJ becomes 2-fold symmetrical on binding to RuvC with unstacked arms; it has a different conformation from HJ DNA in complex with RuvA. In the full resolvosome a probable DNA-RuvA(4)-RuvB(12)-RuvC(2) complex forms which resolves the HJ. Requires Mg(2+) as cofactor.

Its subcellular location is the cytoplasm. It carries out the reaction Endonucleolytic cleavage at a junction such as a reciprocal single-stranded crossover between two homologous DNA duplexes (Holliday junction).. Its function is as follows. The RuvA-RuvB-RuvC complex processes Holliday junction (HJ) DNA during genetic recombination and DNA repair. Endonuclease that resolves HJ intermediates. Cleaves cruciform DNA by making single-stranded nicks across the HJ at symmetrical positions within the homologous arms, yielding a 5'-phosphate and a 3'-hydroxyl group; requires a central core of homology in the junction. The consensus cleavage sequence is 5'-(A/T)TT(C/G)-3'. Cleavage occurs on the 3'-side of the TT dinucleotide at the point of strand exchange. HJ branch migration catalyzed by RuvA-RuvB allows RuvC to scan DNA until it finds its consensus sequence, where it cleaves and resolves the cruciform DNA. The protein is Crossover junction endodeoxyribonuclease RuvC of Desulforamulus reducens (strain ATCC BAA-1160 / DSM 100696 / MI-1) (Desulfotomaculum reducens).